The primary structure comprises 955 residues: Alpha-1,4 glucan phosphorylase L isozyme, chloroplastic/amyloplastic (955 aa).

Residues 1-43 (MSRLSGITPRARDDRSQFQNPRLEIAVPDRTAGLQRTKRTLLV) constitute a chloroplast transit peptide. The interval 522–550 (KVVTESEKDELEEKDTELEKDEDPVPAPI) is disordered. A compositionally biased stretch (acidic residues) spans 528-545 (EKDELEEKDTELEKDEDP). Position 801 is an N6-(pyridoxal phosphate)lysine (K801).

It belongs to the glycogen phosphorylase family. The cofactor is pyridoxal 5'-phosphate.

It localises to the plastid. Its subcellular location is the chloroplast. The protein resides in the amyloplast. The catalysed reaction is [(1-&gt;4)-alpha-D-glucosyl](n) + phosphate = [(1-&gt;4)-alpha-D-glucosyl](n-1) + alpha-D-glucose 1-phosphate. Phosphorylase is an important allosteric enzyme in carbohydrate metabolism. Enzymes from different sources differ in their regulatory mechanisms and in their natural substrates. However, all known phosphorylases share catalytic and structural properties. This is Alpha-1,4 glucan phosphorylase L isozyme, chloroplastic/amyloplastic from Ipomoea batatas (Sweet potato).